We begin with the raw amino-acid sequence, 134 residues long: DNA-directed RNA polymerase subunit omega (134 aa).

The disordered stretch occupies residues 77-108 (IDEPEPDPASLLAAGGNASASGDEEEDAPEAV). Low complexity predominate over residues 85–97 (ASLLAAGGNASAS).

Belongs to the RNA polymerase subunit omega family. As to quaternary structure, the RNAP catalytic core consists of 2 alpha, 1 beta, 1 beta' and 1 omega subunit. When a sigma factor is associated with the core the holoenzyme is formed, which can initiate transcription.

The catalysed reaction is RNA(n) + a ribonucleoside 5'-triphosphate = RNA(n+1) + diphosphate. Its function is as follows. Promotes RNA polymerase assembly. Latches the N- and C-terminal regions of the beta' subunit thereby facilitating its interaction with the beta and alpha subunits. This is DNA-directed RNA polymerase subunit omega from Rhizobium rhizogenes (strain K84 / ATCC BAA-868) (Agrobacterium radiobacter).